A 555-amino-acid polypeptide reads, in one-letter code: Potassium-transporting ATPase potassium-binding subunit (555 aa).

10 consecutive transmembrane segments (helical) span residues 2–22 (IWVA…PTGI), 60–80 (QYAL…YFIF), 130–150 (IGIT…VMAF), 173–193 (VFLP…VPQT), 246–266 (MSNI…PFTY), 278–298 (ILFV…TTSE), 374–394 (AGFV…GLMV), 412–432 (LIAV…ALAL), 483–503 (LVMF…AASL), and 525–545 (GIFI…MLVL).

This sequence belongs to the KdpA family. In terms of assembly, the system is composed of three essential subunits: KdpA, KdpB and KdpC.

Its subcellular location is the cell membrane. Functionally, part of the high-affinity ATP-driven potassium transport (or Kdp) system, which catalyzes the hydrolysis of ATP coupled with the electrogenic transport of potassium into the cytoplasm. This subunit binds the extracellular potassium ions and delivers the ions to the membrane domain of KdpB through an intramembrane tunnel. In Bacillus cereus (strain G9842), this protein is Potassium-transporting ATPase potassium-binding subunit.